We begin with the raw amino-acid sequence, 41 residues long: Photosystem II reaction center protein Y (41 aa).

Met-1 bears the N-formylmethionine mark. Over 1-4 (MDWR) the chain is Lumenal. The chain crosses the membrane as a helical span at residues 5-23 (VLVVLLPVLLAAGWAVRNI). At 24–41 (LPYAVKQVQKLLQKAKAA) the chain is on the cytoplasmic side.

The protein belongs to the PsbY family. As to quaternary structure, PSII is composed of 1 copy each of membrane proteins PsbA, PsbB, PsbC, PsbD, PsbE, PsbF, PsbH, PsbI, PsbJ, PsbK, PsbL, PsbM, PsbT, PsbX, PsbY, PsbZ, Psb30/Ycf12, peripheral proteins PsbO, CyanoQ (PsbQ), PsbU, PsbV and a large number of cofactors. It forms dimeric complexes. This protein is only loosely associated with PSII, and is not often found in crystals. Found on the exterior of the PSII dimer, near cytochrome b559 (psbE and psbF). PSII binds multiple chlorophylls, carotenoids and specific lipids. serves as cofactor.

The protein localises to the cellular thylakoid membrane. Its function is as follows. Loosely associated component of the core of photosystem II, it is not always seen in crystals. PSII is a light-driven water plastoquinone oxidoreductase, using light energy to abstract electrons from H(2)O, generating a proton gradient subsequently used for ATP formation. This Thermosynechococcus vestitus (strain NIES-2133 / IAM M-273 / BP-1) protein is Photosystem II reaction center protein Y.